The sequence spans 389 residues: Trans-2-enoyl-CoA reductase [NADH] (389 aa).

NAD(+)-binding positions include 47 to 52 (GASTGY), 73 to 74 (FE), 110 to 111 (DA), and 138 to 139 (LA). Tyrosine 224 serves as a coordination point for substrate. Tyrosine 234 serves as the catalytic Proton donor. NAD(+)-binding positions include lysine 243 and 272 to 274 (LVT).

Belongs to the TER reductase family. As to quaternary structure, monomer.

The enzyme catalyses a 2,3-saturated acyl-CoA + NAD(+) = a (2E)-enoyl-CoA + NADH + H(+). The protein operates within lipid metabolism; fatty acid biosynthesis. Functionally, involved in the fatty acid synthesis (FAS II). Catalyzes the reduction of a carbon-carbon double bond in an enoyl moiety that is covalently linked to a coenzyme A (CoA). The protein is Trans-2-enoyl-CoA reductase [NADH] of Clostridium perfringens (strain ATCC 13124 / DSM 756 / JCM 1290 / NCIMB 6125 / NCTC 8237 / Type A).